Consider the following 1057-residue polypeptide: MLCWGNASYGQLGLGGIDEEIVLEPRKSDFFVNKKVRDVGCGLRHTVFVLDDGTVYTCGCNDLGQLGHEKSRKKPEQVVALDAQNIVAVSCGEAHTLALNDKGQVYAWGLDSDGQLGLQGSEECIRVPRNIKSLSDIQIVQVACGYYHSLALSKASEVFCWGQNKYGQLGLGIECQKQTSPQLIKSLLGIPFMQVAAGGAHSFVLTLSGAIFGWGRNKFGQLGLNDENDRYVPNLLKSLRSQKIVYICCGEDHTAALTKEGGVFTFGAGGYGQLGHNSTSHEINPRKVFELMGSIVTQIACGRQHTSAFVPSSGRIYSFGLGGNGQLGTGSTSNRKSPFTVKGNWFSYNGQCPQDIGSEDYFCVKRIFSGGDQSFSHYSSPQSCGPPDDFRRSDPSKQIWTVNEALIQKWLSYPSGRFPVEIANEIDGTFSSSGCLNGSFLAVSNDDHYRTGTRFSGVDMNAARLLFHRLIQPDHPQISQQVAASLEKNLIPKLTSSLPDVEALRFYLTLPECPLMSDCNNFTTIAIPFGTALVNLEKAPLKVLENWWSVLEPPLFLKIVELFKEVVVHLLKLYKIGIPPSERRIFNSFLHTALKVLEILHRVNERTGQLIQYDKFYIHEVQELIDIRNDYINWVQQQAYGVDVSHGITELADIPVTICTYPFVFDAQAKTTLLQTDAVLQMQMAIDQAHRQNVSSLFLPVIESVNPCLILVVRRENIVGDAMEVLRKTKNIDYKKPLKVIFVGEDAVDAGGVRKEFFLLIMRELLDPKYGMFRYYEDSRLIWFSDKTFEDSDLFHLIGVICGLAIYNFTIVDLHFPLALYKKLLKRKPSLDDLKELMPDVGRSMQQLLDYPEDDIEETFCLNFTITVENFGATEVKELVLNGADTAVNKQNRQEFVDAYVDYIFNKSVASLFDAFHAGFHKVCGGKVLLLFQPNELQAMVIGNTNYDWKELEKNTEYKGEYWAEHPTIKIFWEVFHELPLEKKKQFLLFLTGSDRIPILGMKSLKLVIQSTGGGESYLPVSHTCFNLLDLPKYTEKETLRCKLIQAIDHNEGFSLI.

RCC1 repeat units lie at residues 1-51 (MLCW…FVLD), 52-101 (DGTV…ALND), 102-154 (KGQV…ALSK), 156-207 (SEVF…VLTL), 208-259 (SGAI…ALTK), 261-311 (GGVF…AFVP), and 313-366 (SGRI…CVKR). The 328-residue stretch at 730-1057 (KNIDYKKPLK…IDHNEGFSLI (328 aa)) folds into the HECT domain. Cysteine 1025 acts as the Glycyl thioester intermediate in catalysis.

It localises to the cytoplasm. Its subcellular location is the cytosol. It catalyses the reaction S-ubiquitinyl-[E2 ubiquitin-conjugating enzyme]-L-cysteine + [acceptor protein]-L-lysine = [E2 ubiquitin-conjugating enzyme]-L-cysteine + N(6)-ubiquitinyl-[acceptor protein]-L-lysine.. It functions in the pathway protein modification; protein ubiquitination. Probable E3 ubiquitin-protein ligase involved in either protein trafficking or in the distribution of cellular structures. Required for spermatozoon maturation and fertility, and for the removal of the cytoplasmic droplet of the spermatozoon. E3 ubiquitin-protein ligases accept ubiquitin from an E2 ubiquitin-conjugating enzyme in the form of a thioester and then directly transfer it to targeted substrates. This Rattus norvegicus (Rat) protein is Probable E3 ubiquitin-protein ligase HERC4 (Herc4).